A 113-amino-acid chain; its full sequence is uncharacterized protein (113 aa).

It belongs to the ycf68 family.

The protein localises to the plastid. It localises to the chloroplast. This is an uncharacterized protein from Eucalyptus globulus subsp. globulus (Tasmanian blue gum).